The following is a 499-amino-acid chain: Endoglucanase (499 aa).

The first 29 residues, 1-29 (MKRSISIFITCLLITLLTMGGMLASPASA), serve as a signal peptide directing secretion. Substrate is bound by residues H65, 69-70 (WY), Y96, and H131. The active-site Proton donor is E169. Y231 contacts substrate. Catalysis depends on E257, which acts as the Nucleophile. Substrate contacts are provided by residues 263 to 264 (AS), W291, and 296 to 298 (KQE). Positions 350–499 (QENGISVQYR…GKLIWGTEPN (150 aa)) constitute a CBM3 domain.

It belongs to the glycosyl hydrolase 5 (cellulase A) family.

It carries out the reaction Endohydrolysis of (1-&gt;4)-beta-D-glucosidic linkages in cellulose, lichenin and cereal beta-D-glucans.. The polypeptide is Endoglucanase (bglC) (Bacillus subtilis).